The sequence spans 126 residues: Protein ApaG (126 aa).

Residues 2–126 enclose the ApaG domain; sequence TSLEDSIKVE…FRLAVPGMLH (125 aa).

The sequence is that of Protein ApaG from Shewanella sediminis (strain HAW-EB3).